The following is a 474-amino-acid chain: Bifunctional protein HldE (474 aa).

The tract at residues 1–318 is ribokinase; sequence MKLSMPRFDQ…RAVQREQGSE (318 aa). 194–197 is a binding site for ATP; that stretch reads NLSE. D263 is an active-site residue. Positions 343–474 are cytidylyltransferase; it reads FTNGCFDILH…AIVEKIRQKG (132 aa).

The protein in the N-terminal section; belongs to the carbohydrate kinase PfkB family. This sequence in the C-terminal section; belongs to the cytidylyltransferase family. In terms of assembly, homodimer.

The enzyme catalyses D-glycero-beta-D-manno-heptose 7-phosphate + ATP = D-glycero-beta-D-manno-heptose 1,7-bisphosphate + ADP + H(+). The catalysed reaction is D-glycero-beta-D-manno-heptose 1-phosphate + ATP + H(+) = ADP-D-glycero-beta-D-manno-heptose + diphosphate. The protein operates within nucleotide-sugar biosynthesis; ADP-L-glycero-beta-D-manno-heptose biosynthesis; ADP-L-glycero-beta-D-manno-heptose from D-glycero-beta-D-manno-heptose 7-phosphate: step 1/4. It functions in the pathway nucleotide-sugar biosynthesis; ADP-L-glycero-beta-D-manno-heptose biosynthesis; ADP-L-glycero-beta-D-manno-heptose from D-glycero-beta-D-manno-heptose 7-phosphate: step 3/4. Catalyzes the phosphorylation of D-glycero-D-manno-heptose 7-phosphate at the C-1 position to selectively form D-glycero-beta-D-manno-heptose-1,7-bisphosphate. Functionally, catalyzes the ADP transfer from ATP to D-glycero-beta-D-manno-heptose 1-phosphate, yielding ADP-D-glycero-beta-D-manno-heptose. This chain is Bifunctional protein HldE, found in Pseudomonas aeruginosa (strain UCBPP-PA14).